Here is a 268-residue protein sequence, read N- to C-terminus: Basic endochitinase CHB4 (268 aa).

An N-terminal signal peptide occupies residues 1–24 (MALTKLSLVLFLCFLGLYSETVKS). Residues 25-59 (QNCGCAPNLCCSQFGYCGSTDAYCGTGCRSGPCRS) form the Chitin-binding type-1 domain. 7 disulfides stabilise this stretch: cysteine 27–cysteine 35, cysteine 29–cysteine 41, cysteine 34–cysteine 48, cysteine 52–cysteine 57, cysteine 92–cysteine 137, cysteine 150–cysteine 159, and cysteine 236–cysteine 268. Residues 71–268 (SVGSIVTQAF…GVDPGPNLSC (198 aa)) are catalytic. Glutamate 132 functions as the Proton donor in the catalytic mechanism. The N-linked (GlcNAc...) asparagine glycan is linked to asparagine 265.

The protein belongs to the glycosyl hydrolase 19 family. Chitinase class I subfamily.

It is found in the secreted. Its subcellular location is the extracellular space. The enzyme catalyses Random endo-hydrolysis of N-acetyl-beta-D-glucosaminide (1-&gt;4)-beta-linkages in chitin and chitodextrins.. In terms of biological role, defense against chitin-containing fungal pathogens. This is Basic endochitinase CHB4 from Brassica napus (Rape).